The following is a 312-amino-acid chain: Olfactory receptor 10K2 (312 aa).

The Extracellular portion of the chain corresponds to 1–25 (MERVNETVVREVIFLGFSSLARLQQ). N-linked (GlcNAc...) asparagine glycosylation is present at Asn5. A helical transmembrane segment spans residues 26-46 (LLFVIFLLLYLFTLGTNAIII). The Cytoplasmic portion of the chain corresponds to 47–54 (STIVLDRA). The helical transmembrane segment at 55 to 75 (LHIPMYFFLAILSCSEICYTF) threads the bilayer. Residues 76–99 (IIVPKMLVDLLSQKKTISFLGCAI) are Extracellular-facing. A helical membrane pass occupies residues 100–120 (QMFSFLFLGCSHSFLLAVMGY). The Cytoplasmic portion of the chain corresponds to 121-139 (DRYIAICNPLRYSVLMGHG). Residues 140-160 (VCMGLVAAACACGFTVAQIIT) traverse the membrane as a helical segment. The Extracellular portion of the chain corresponds to 161–197 (SLVFHLPFYSSNQLHHFFCDIAPVLKLASHHNHFSQI). Residues 198 to 217 (VIFMLCTLVLAIPLLLILVS) form a helical membrane-spanning segment. Residues 218-237 (YVHILSAILQFPSTLGRCKA) are Cytoplasmic-facing. Residues 238-258 (FSTCVSHLIIVTVHYGCASFI) form a helical membrane-spanning segment. Topologically, residues 259-271 (YLRPQSNYSSSQD) are extracellular. The N-linked (GlcNAc...) asparagine glycan is linked to Asn265. The helical transmembrane segment at 272–292 (ALISVSYTIITPLFNPMIYSL) threads the bilayer. The Cytoplasmic portion of the chain corresponds to 293 to 312 (RNKEFKSALCKIVRRTISLL).

This sequence belongs to the G-protein coupled receptor 1 family.

The protein resides in the cell membrane. Functionally, odorant receptor. This Homo sapiens (Human) protein is Olfactory receptor 10K2 (OR10K2).